We begin with the raw amino-acid sequence, 189 residues long: Transcription factor FapR (189 aa).

It belongs to the FapR family.

Functionally, transcriptional factor involved in regulation of membrane lipid biosynthesis by repressing genes involved in fatty acid and phospholipid metabolism. This chain is Transcription factor FapR, found in Exiguobacterium sp. (strain ATCC BAA-1283 / AT1b).